The sequence spans 375 residues: Chaperone protein DnaJ (375 aa).

Residues 5 to 70 (GYYEVLGVSK…QKRQAYDQFG (66 aa)) form the J domain. The CR-type zinc-finger motif lies at 142–220 (GKEYKIEIPR…CKGEGLTEKR (79 aa)). 8 residues coordinate Zn(2+): cysteine 155, cysteine 158, cysteine 172, cysteine 175, cysteine 194, cysteine 197, cysteine 208, and cysteine 211. CXXCXGXG motif repeat units lie at residues 155 to 162 (CVDCTGSG), 172 to 179 (CPDCSGTG), 194 to 201 (CPRCKGKG), and 208 to 215 (CKTCKGEG).

It belongs to the DnaJ family. Homodimer. Requires Zn(2+) as cofactor.

The protein localises to the cytoplasm. In terms of biological role, participates actively in the response to hyperosmotic and heat shock by preventing the aggregation of stress-denatured proteins and by disaggregating proteins, also in an autonomous, DnaK-independent fashion. Unfolded proteins bind initially to DnaJ; upon interaction with the DnaJ-bound protein, DnaK hydrolyzes its bound ATP, resulting in the formation of a stable complex. GrpE releases ADP from DnaK; ATP binding to DnaK triggers the release of the substrate protein, thus completing the reaction cycle. Several rounds of ATP-dependent interactions between DnaJ, DnaK and GrpE are required for fully efficient folding. Also involved, together with DnaK and GrpE, in the DNA replication of plasmids through activation of initiation proteins. This is Chaperone protein DnaJ from Leptospira biflexa serovar Patoc (strain Patoc 1 / Ames).